The sequence spans 272 residues: uncharacterized protein (272 aa).

A signal peptide spans 1 to 22 (MEYIKKIALYMSVLLLIIFIGG). Cys23 carries the N-palmitoyl cysteine lipid modification. Residue Cys23 is the site of S-diacylglycerol cysteine attachment.

It belongs to the staphylococcal tandem lipoprotein family.

The protein resides in the cell membrane. This is an uncharacterized protein from Staphylococcus aureus (strain MRSA252).